The sequence spans 175 residues: NADH-ubiquinone oxidoreductase chain 6 (175 aa).

6 helical membrane-spanning segments follow: residues 1 to 21 (MMYI…GFSS), 25 to 45 (PVYG…IIMG), 51 to 71 (LGLV…GYTI), 87 to 107 (VVLG…MWLF), 112 to 132 (ELVG…EGGF), and 148 to 168 (YGFW…FIAI).

It belongs to the complex I subunit 6 family. Core subunit of respiratory chain NADH dehydrogenase (Complex I) which is composed of 45 different subunits.

The protein localises to the mitochondrion inner membrane. It catalyses the reaction a ubiquinone + NADH + 5 H(+)(in) = a ubiquinol + NAD(+) + 4 H(+)(out). Core subunit of the mitochondrial membrane respiratory chain NADH dehydrogenase (Complex I) which catalyzes electron transfer from NADH through the respiratory chain, using ubiquinone as an electron acceptor. Essential for the catalytic activity and assembly of complex I. In Loxodonta africana (African elephant), this protein is NADH-ubiquinone oxidoreductase chain 6 (MT-ND6).